A 95-amino-acid chain; its full sequence is Small ribosomal subunit protein bS6 (95 aa).

Belongs to the bacterial ribosomal protein bS6 family.

Binds together with bS18 to 16S ribosomal RNA. The chain is Small ribosomal subunit protein bS6 from Thermoanaerobacter pseudethanolicus (strain ATCC 33223 / 39E) (Clostridium thermohydrosulfuricum).